The chain runs to 261 residues: G patch domain-containing protein 11 (261 aa).

Disordered regions lie at residues 1–67, 88–124, and 184–213; these read MEEE…LNEA, ALGK…AEEN, and EAWY…LVEE. Basic and acidic residues-rich tracts occupy residues 29 to 64 and 111 to 124; these read RVKE…DTKL and IGHE…AEEN. The stretch at 31-65 forms a coiled coil; the sequence is KECYEKEEKHKEANIKNRQQKLKDVEKEKRDTKLN. The 47-residue stretch at 70 to 116 folds into the G-patch domain; that stretch reads NENKGFALLQKMGYKKGQALGKKGDGIVEPIPLNIKTGRSGIGHEEM. Residues 190-222 are a coiled coil; it reads KMNEQEADEEADEETEEDEDLVEEELSTLEKLQ. Over residues 194-213 the composition is skewed to acidic residues; it reads QEADEEADEETEEDEDLVEE.

The protein belongs to the GPATCH11 family.

The protein localises to the chromosome. The protein resides in the centromere. It is found in the kinetochore. In Xenopus tropicalis (Western clawed frog), this protein is G patch domain-containing protein 11 (gpatch11).